The sequence spans 78 residues: Acyl carrier protein (78 aa).

Positions 2 to 77 constitute a Carrier domain; it reads SNLEERVKKI…AAIDYVTANA (76 aa). Position 37 is an O-(pantetheine 4'-phosphoryl)serine (Ser-37).

This sequence belongs to the acyl carrier protein (ACP) family. Post-translationally, 4'-phosphopantetheine is transferred from CoA to a specific serine of apo-ACP by AcpS. This modification is essential for activity because fatty acids are bound in thioester linkage to the sulfhydryl of the prosthetic group.

It is found in the cytoplasm. It functions in the pathway lipid metabolism; fatty acid biosynthesis. Its function is as follows. Carrier of the growing fatty acid chain in fatty acid biosynthesis. The chain is Acyl carrier protein from Vibrio vulnificus (strain CMCP6).